The primary structure comprises 142 residues: General odorant-binding protein 99a (142 aa).

The signal sequence occupies residues 1–16 (MKVFVAICVLIGLASA). 3 disulfides stabilise this stretch: Cys33–Cys64, Cys60–Cys116, and Cys105–Cys125.

It belongs to the PBP/GOBP family. As to expression, expressed in larval chemosensory organ. Specifically expressed exclusively in a subset of chemosensory sensilla on the third antennal segment.

Its subcellular location is the secreted. Functionally, present in the aqueous fluid surrounding olfactory sensory dendrites and are thought to aid in the capture and transport of hydrophobic odorants into and through this fluid. The polypeptide is General odorant-binding protein 99a (Obp99a) (Drosophila melanogaster (Fruit fly)).